Consider the following 250-residue polypeptide: Ribosomal RNA small subunit methyltransferase J (250 aa).

Residues 101 to 102 (RD), 117 to 118 (ER), 153 to 154 (SS), and aspartate 171 each bind S-adenosyl-L-methionine.

This sequence belongs to the methyltransferase superfamily. RsmJ family.

It is found in the cytoplasm. The catalysed reaction is guanosine(1516) in 16S rRNA + S-adenosyl-L-methionine = N(2)-methylguanosine(1516) in 16S rRNA + S-adenosyl-L-homocysteine + H(+). Its function is as follows. Specifically methylates the guanosine in position 1516 of 16S rRNA. This is Ribosomal RNA small subunit methyltransferase J from Shigella flexneri serotype 5b (strain 8401).